Consider the following 454-residue polypeptide: MAAWKSWAALRLCATVVLLDMVVCKGFVEDLDESFKENRNDDIWLVDFYAPWCGHCKKLEPIWNEVGLEMKSIGSPVKVGKMDATSYSSIASEFGVRGYPTIKLLKGDLAYNHRGPRTKDDIIEFAHRVSGALIRPLPSQQMFEHMQKRHRVFFVYIGGESPLKEKYIDAASELIVYTYFFSASEEVVPEYVTLKEMPAVLVFKDETYFVYDEYEDGDLSSWINRERFQNYLAMDGFLLYELGDTGKLVALAVIDEKNTSVEHTRLKSIIQEVARDYRDLFHRDFQFGHMDGNDYINTLLMDELTVPTVVVLNTSNQQYFLLDRQIKNVEDMVQFINNILDGTVEAQGGDSILQRLKRIVFDAKSTIVSIFKSSPLMGCFLFGLPLGVISIMCYGIYTADTDGGYIEERYEVSKSENENQEQIEESKEQQEPSSGGSVVPTVQEPKDVLEKKKD.

The signal sequence occupies residues 1 to 24 (MAAWKSWAALRLCATVVLLDMVVC). Positions 25–128 (KGFVEDLDES…KDDIIEFAHR (104 aa)) constitute a Thioredoxin domain. Residues 25 to 375 (KGFVEDLDES…TIVSIFKSSP (351 aa)) are Lumenal-facing. Residues cysteine 53 and cysteine 56 each act as nucleophile in the active site. Residues cysteine 53 and cysteine 56 are joined by a disulfide bond. Residues asparagine 258 and asparagine 313 are each glycosylated (N-linked (GlcNAc...) asparagine). Residues 376-396 (LMGCFLFGLPLGVISIMCYGI) form a helical membrane-spanning segment. Over 397 to 454 (YTADTDGGYIEERYEVSKSENENQEQIEESKEQQEPSSGGSVVPTVQEPKDVLEKKKD) the chain is Cytoplasmic. Positions 412-454 (VSKSENENQEQIEESKEQQEPSSGGSVVPTVQEPKDVLEKKKD) are disordered. Basic and acidic residues predominate over residues 444 to 454 (EPKDVLEKKKD). Positions 451–454 (KKKD) match the Di-lysine motif motif.

Belongs to the protein disulfide isomerase family.

The protein resides in the endoplasmic reticulum membrane. It carries out the reaction Catalyzes the rearrangement of -S-S- bonds in proteins.. In terms of biological role, probable disulfide isomerase, which participates in the folding of proteins containing disulfide bonds. May act as a dithiol oxidase. Acts as a regulator of endoplasmic reticulum-mitochondria contact sites via its ability to regulate redox signals. This is Protein disulfide-isomerase TMX3 (TMX3) from Pongo abelii (Sumatran orangutan).